The following is a 371-amino-acid chain: Chaperone protein DnaJ (371 aa).

In terms of domain architecture, J spans 5–69; sequence DYYEVLGLSK…QKRAQYDQFG (65 aa). The segment at 133-215 adopts a CR-type zinc-finger fold; that stretch reads GKELNVEIPV…CHGSGKVRKR (83 aa). Zn(2+)-binding residues include C146, C149, C163, C166, C189, C192, C203, and C206. CXXCXGXG motif repeat units lie at residues 146–153, 163–170, 189–196, and 203–210; these read CDTCKGSG, CKHCSGSG, CGHCSGTG, and CTTCHGSG.

This sequence belongs to the DnaJ family. As to quaternary structure, homodimer. Zn(2+) is required as a cofactor.

The protein resides in the cytoplasm. Participates actively in the response to hyperosmotic and heat shock by preventing the aggregation of stress-denatured proteins and by disaggregating proteins, also in an autonomous, DnaK-independent fashion. Unfolded proteins bind initially to DnaJ; upon interaction with the DnaJ-bound protein, DnaK hydrolyzes its bound ATP, resulting in the formation of a stable complex. GrpE releases ADP from DnaK; ATP binding to DnaK triggers the release of the substrate protein, thus completing the reaction cycle. Several rounds of ATP-dependent interactions between DnaJ, DnaK and GrpE are required for fully efficient folding. Also involved, together with DnaK and GrpE, in the DNA replication of plasmids through activation of initiation proteins. The chain is Chaperone protein DnaJ from Bacillus cereus (strain G9842).